The sequence spans 202 residues: Large ribosomal subunit protein eL13 (202 aa).

The segment at 183–202 (GIREKRAKEKAEAEAEKAKK) is disordered.

The protein belongs to the eukaryotic ribosomal protein eL13 family. As to quaternary structure, component of the large ribosomal subunit. Mature ribosomes consist of a small (40S) and a large (60S) subunit. The 40S subunit contains about 32 different proteins and 1 molecule of RNA (18S). The 60S subunit contains 45 different proteins and 3 molecules of RNA (25S, 5.8S and 5S).

It is found in the cytoplasm. Its function is as follows. Component of the ribosome, a large ribonucleoprotein complex responsible for the synthesis of proteins in the cell. The small ribosomal subunit (SSU) binds messenger RNAs (mRNAs) and translates the encoded message by selecting cognate aminoacyl-transfer RNA (tRNA) molecules. The large subunit (LSU) contains the ribosomal catalytic site termed the peptidyl transferase center (PTC), which catalyzes the formation of peptide bonds, thereby polymerizing the amino acids delivered by tRNAs into a polypeptide chain. The nascent polypeptides leave the ribosome through a tunnel in the LSU and interact with protein factors that function in enzymatic processing, targeting, and the membrane insertion of nascent chains at the exit of the ribosomal tunnel. This Candida albicans (strain SC5314 / ATCC MYA-2876) (Yeast) protein is Large ribosomal subunit protein eL13.